The primary structure comprises 737 residues: Glycogen [starch] synthase, muscle (737 aa).

Ser-8 carries the phosphoserine; by AMPK and PKA modification. Position 11 is a phosphoserine (Ser-11). Lys-39 serves as a coordination point for UDP. UDP-alpha-D-glucose is bound by residues His-205 and Arg-211. Residues His-291, Glu-292, Gln-294, His-297, and Lys-301 each contribute to the alpha-D-glucose 6-phosphate site. Arg-331 is a UDP binding site. Arg-331 contributes to the UDP-alpha-D-glucose binding site. Ser-412 is subject to Phosphoserine. An alpha-D-glucose 6-phosphate-binding site is contributed by His-501. Positions 510, 512, and 513 each coordinate UDP-alpha-D-glucose. UDP is bound at residue Thr-515. Residues Arg-582 and Arg-586 each coordinate alpha-D-glucose 6-phosphate. The tract at residues 634–737 (YRYPRPASVP…PTSSLGEERN (104 aa)) is disordered. Phosphoserine occurs at positions 641, 645, 649, and 652. Position 653 is a phosphoserine; by GSK3-alpha and GSK3-beta (Ser-653). Ser-657 carries the post-translational modification Phosphoserine; by CK2. Over residues 658-681 (EDEEDPRNGPLEEDGERYDEDEEA) the composition is skewed to acidic residues. Basic and acidic residues predominate over residues 682 to 695 (AKDRRNIRAPEWPR). A Phosphoserine modification is found at Ser-698. The span at 698–714 (SCTSSTSGSKRNSVDTA) shows a compositional bias: polar residues. A Phosphothreonine modification is found at Thr-700. At Ser-710 the chain carries Phosphoserine. Residues 715 to 737 (TSSSLSTPSEPLSPTSSLGEERN) show a composition bias toward low complexity. Position 721 is a phosphothreonine (Thr-721). Phosphoserine occurs at positions 727 and 731.

It belongs to the glycosyltransferase 3 family. In terms of assembly, part of the GYS1-GYG1 complex, a heterooctamer composed of a tetramer of GYS1 and 2 dimers of GYG1, where each GYS1 protomer binds to one GYG1 subunit (via GYG1 C-terminus); the GYS1 tetramer may dissociate from GYG1 dimers to continue glycogen polymerization on its own. Phosphorylation at Ser-8 by AMPK inactivates the enzyme activity. Primed phosphorylation at Ser-657 (site 5) by CSNK2A1 and CSNK2A2 is required for inhibitory phosphorylation at Ser-641 (site 3a), Ser-645 (site 3b), Ser-649 (site 3c) and Ser-653 (site 4) by GSK3A an GSK3B. Phosphorylated at Ser-641 by DYRK2, leading to inactivation. Phosphorylated at Ser-641 by PASK, leading to inactivation; phosphorylation by PASK is inhibited by glycogen. Dephosphorylation at Ser-641 and Ser-645 by PP1 activates the enzyme. In terms of tissue distribution, expressed in skeletal muscle and most other cell types where glycogen is present.

The catalysed reaction is [(1-&gt;4)-alpha-D-glucosyl](n) + UDP-alpha-D-glucose = [(1-&gt;4)-alpha-D-glucosyl](n+1) + UDP + H(+). It functions in the pathway glycan biosynthesis; glycogen biosynthesis. Allosteric activation by glucose-6-phosphate. Phosphorylation reduces enzyme activity by constraining a tense conformation of the tetramer through inter-subunit interaction. Phosphorylation reduces the activity towards UDP-glucose. When in the non-phosphorylated state, glycogen synthase does not require glucose-6-phosphate as an allosteric activator; when phosphorylated it does. Functionally, glycogen synthase participates in the glycogen biosynthetic process along with glycogenin and glycogen branching enzyme. Extends the primer composed of a few glucose units formed by glycogenin by adding new glucose units to it. In this context, glycogen synthase transfers the glycosyl residue from UDP-Glc to the non-reducing end of alpha-1,4-glucan. In Homo sapiens (Human), this protein is Glycogen [starch] synthase, muscle.